The chain runs to 615 residues: Elongation factor 4 (615 aa).

The region spanning 17–198 (ASIRNFCIIA…RVSRTIPAPV (182 aa)) is the tr-type G domain. GTP is bound by residues 29–34 (DHGKST) and 145–148 (NKID).

Belongs to the TRAFAC class translation factor GTPase superfamily. Classic translation factor GTPase family. LepA subfamily.

It is found in the cell membrane. The enzyme catalyses GTP + H2O = GDP + phosphate + H(+). In terms of biological role, required for accurate and efficient protein synthesis under certain stress conditions. May act as a fidelity factor of the translation reaction, by catalyzing a one-codon backward translocation of tRNAs on improperly translocated ribosomes. Back-translocation proceeds from a post-translocation (POST) complex to a pre-translocation (PRE) complex, thus giving elongation factor G a second chance to translocate the tRNAs correctly. Binds to ribosomes in a GTP-dependent manner. This chain is Elongation factor 4, found in Clavibacter sepedonicus (Clavibacter michiganensis subsp. sepedonicus).